We begin with the raw amino-acid sequence, 96 residues long: MRSQKKGPFIDTHVLAKIEDMNNRNEKKVVRTWSRRSTIIPEMVGHTLAVHNGKKFIPVYVTENMVGHKLGEFSFTRQFKGHSVKAATETAAKPAR.

Belongs to the universal ribosomal protein uS19 family.

In terms of biological role, protein S19 forms a complex with S13 that binds strongly to the 16S ribosomal RNA. This is Small ribosomal subunit protein uS19 from Koribacter versatilis (strain Ellin345).